The sequence spans 271 residues: Putative carboxymethylenebutenolidase (271 aa).

Residues Cys-147, Asp-204, and His-236 contribute to the active site.

The protein belongs to the dienelactone hydrolase family.

The enzyme catalyses 2-(5-oxo-2,5-dihydrofuran-2-ylidene)acetate + H2O = 4-oxohex-2-enedioate + H(+). The sequence is that of Putative carboxymethylenebutenolidase (ysgA) from Escherichia coli O157:H7.